Consider the following 130-residue polypeptide: Guanylate kinase (130 aa).

The region spanning 1–130 (KIFEDPTTSY…EKIQSRVNEA (130 aa)) is the Guanylate kinase-like domain.

Belongs to the guanylate kinase family.

It localises to the cytoplasm. The enzyme catalyses GMP + ATP = GDP + ADP. In terms of biological role, essential for recycling GMP and indirectly, cGMP. The sequence is that of Guanylate kinase (gmk) from Staphylococcus epidermidis.